A 912-amino-acid polypeptide reads, in one-letter code: Protein translocase subunit SecA (912 aa).

ATP-binding positions include Gln-87, 105 to 109 (GEGKT), and Asp-508. Positions 855 to 912 (QHQDAGGYGADEEVEQMQGGNAPVPVSQVTRDEPKVGRNDPCPCGSGKKYKHCHGQLS) are disordered. Zn(2+) is bound by residues Cys-896, Cys-898, Cys-907, and His-908. Residues 902–912 (KKYKHCHGQLS) show a composition bias toward basic residues.

Belongs to the SecA family. In terms of assembly, monomer and homodimer. Part of the essential Sec protein translocation apparatus which comprises SecA, SecYEG and auxiliary proteins SecDF-YajC and YidC. It depends on Zn(2+) as a cofactor.

It is found in the cell inner membrane. It localises to the cytoplasm. It carries out the reaction ATP + H2O + cellular proteinSide 1 = ADP + phosphate + cellular proteinSide 2.. In terms of biological role, part of the Sec protein translocase complex. Interacts with the SecYEG preprotein conducting channel. Has a central role in coupling the hydrolysis of ATP to the transfer of proteins into and across the cell membrane, serving both as a receptor for the preprotein-SecB complex and as an ATP-driven molecular motor driving the stepwise translocation of polypeptide chains across the membrane. The polypeptide is Protein translocase subunit SecA (Xanthomonas campestris pv. campestris (strain B100)).